Reading from the N-terminus, the 118-residue chain is Small ribosomal subunit protein uS13 (118 aa).

The tract at residues Gly99–Lys118 is disordered.

It belongs to the universal ribosomal protein uS13 family. Part of the 30S ribosomal subunit. Forms a loose heterodimer with protein S19. Forms two bridges to the 50S subunit in the 70S ribosome.

Its function is as follows. Located at the top of the head of the 30S subunit, it contacts several helices of the 16S rRNA. In the 70S ribosome it contacts the 23S rRNA (bridge B1a) and protein L5 of the 50S subunit (bridge B1b), connecting the 2 subunits; these bridges are implicated in subunit movement. Contacts the tRNAs in the A and P-sites. The protein is Small ribosomal subunit protein uS13 of Xylella fastidiosa (strain M12).